Reading from the N-terminus, the 213-residue chain is Translation initiation factor IF-3 (213 aa).

Positions 178–213 are disordered; the sequence is VKTLIKSEKPEKPEKPEKSEKTEKQGPSTPPAPSAS. The span at 182-201 shows a compositional bias: basic and acidic residues; sequence IKSEKPEKPEKPEKSEKTEK.

It belongs to the IF-3 family. As to quaternary structure, monomer.

The protein localises to the cytoplasm. In terms of biological role, IF-3 binds to the 30S ribosomal subunit and shifts the equilibrium between 70S ribosomes and their 50S and 30S subunits in favor of the free subunits, thus enhancing the availability of 30S subunits on which protein synthesis initiation begins. This chain is Translation initiation factor IF-3, found in Solibacter usitatus (strain Ellin6076).